We begin with the raw amino-acid sequence, 265 residues long: Gamma-secretase subunit APH-1A (265 aa).

Residues 1–2 lie on the Lumenal side of the membrane; that stretch reads MG. The helical transmembrane segment at 3 to 23 threads the bilayer; it reads AAVFFGCTFVAFGPAFSLFLI. Topologically, residues 24–31 are cytoplasmic; that stretch reads TVAGDPLR. A helical membrane pass occupies residues 32–52; that stretch reads VIILVAGAFFWLVSLLLASVV. The Lumenal portion of the chain corresponds to 53–68; sequence WFILVHVTDRSDARLQ. Residues 69 to 89 traverse the membrane as a helical segment; it reads YGLLIFGAAVSVLLQEVFRFA. Topologically, residues 90–118 are cytoplasmic; that stretch reads YYKLLKKADEGLASLSEDGRSPISIRQMA. Residues 119-139 form a helical membrane-spanning segment; sequence YVSGLSFGIISGVFSVINILA. The Lumenal segment spans residues 140-158; the sequence is DALGPGVVGIHGDSPYYFL. Residues 159–179 form a helical membrane-spanning segment; the sequence is TSAFLTAAIILLHTFWGVVFF. Topologically, residues 180 to 186 are cytoplasmic; the sequence is DACERRR. The chain crosses the membrane as a helical span at residues 187-207; sequence YWALGLVVGSHLLTSGLTFLN. The Lumenal portion of the chain corresponds to 208-213; that stretch reads PWYEAS. A helical membrane pass occupies residues 214 to 234; sequence LLPIYAVTVSMGLWAFITAGG. Over 235 to 265 the chain is Cytoplasmic; sequence SLRSIQRSLSCRRQEDSRVMVYSALRIPPED.

Belongs to the APH-1 family. The functional gamma-secretase complex is composed of at least four polypeptides: a presenilin homodimer (PSEN1 or PSEN2), nicastrin (NCSTN), APH1 (APH1A or APH1B) and PSENEN/PEN2.

Its subcellular location is the endoplasmic reticulum membrane. It localises to the golgi apparatus. The protein localises to the golgi stack membrane. In terms of biological role, non-catalytic subunit of the gamma-secretase complex, an endoprotease complex that catalyzes the intramembrane cleavage of integral membrane proteins such as Notch receptors and APP (amyloid-beta precursor protein). Required for normal gamma-secretase assembly. The gamma-secretase complex plays a role in Notch and Wnt signaling cascades and regulation of downstream processes via its role in processing key regulatory proteins, and by regulating cytosolic CTNNB1 levels. The protein is Gamma-secretase subunit APH-1A (Aph1a) of Mus musculus (Mouse).